Consider the following 323-residue polypeptide: Putative HTH-type transcriptional regulatory protein Hlac_0273 (323 aa).

An HTH cro/C1-type domain is found at L132–L189. The H-T-H motif DNA-binding region spans L143–D162. The disordered stretch occupies residues V188–D211.

This is Putative HTH-type transcriptional regulatory protein Hlac_0273 from Halorubrum lacusprofundi (strain ATCC 49239 / DSM 5036 / JCM 8891 / ACAM 34).